A 768-amino-acid chain; its full sequence is Disabled homolog 2 (768 aa).

Polar residues predominate over residues 1-16 (MSNEVETSTTNGQPDQ). A disordered region spans residues 1–36 (MSNEVETSTTNGQPDQQAAPKAPSKKEKKKGSEKTD). Serine 2 bears the N-acetylserine mark. Serine 2 bears the Phosphoserine mark. Positions 45–196 (GDGVKYKAKL…KAEENGSEAL (152 aa)) constitute a PID domain. Tyrosine 170 is modified (phosphotyrosine). Position 193 is a phosphoserine (serine 193). The interval 230–447 (ESRDILLVDL…KPGRGRRTAK (218 aa)) is required for localization to clathrin-coated pits. Positions 285-449 (NFFPTPNPDP…GRGRRTAKSS (165 aa)) are disordered. 2 short sequence motifs (DPF) span residues 293 to 295 (DPF) and 298 to 300 (DPF). Polar residues-rich tracts occupy residues 303–317 (PDQSAPSSFHSLTSA), 325–334 (GSLSTPQSKG), and 367–381 (PSSQTQQAVRTQNGV). Phosphoserine; in mitosis occurs at positions 326 and 328. A Phosphoserine modification is found at serine 401. A sufficient for interaction with GRB2 region spans residues 601 to 731 (TISTQSFPQP…GVLSGTKSAD (131 aa)). The required for interaction with CSK stretch occupies residues 619 to 627 (PPQPPPRNG). The interval 649 to 768 (KEVKEMFKDF…HRSPFGNPFA (120 aa)) is required for interaction with MYO6. 2 disordered regions span residues 660-682 (LRQPPLVPSRKGETPSSGTSSAF) and 709-768 (NKIN…NPFA). Residues 663–671 (PPLVPSRKG) are required for interaction with GRB2 and CSK. Threonine 673 is modified (phosphothreonine). Serine 675 is subject to Phosphoserine. Positions 708–724 (LNKINEPPKPAPRQGVL) are sufficient for interaction with SH3KBP1 SH3 domain. Polar residues predominate over residues 724–755 (LSGTKSADNSLENPFSKGFSSTNPSVVSQPAS). 2 positions are modified to phosphoserine: serine 729 and serine 761.

In terms of assembly, can interact (via PID domain) with LDLR, APP, APLP1 and APLP2, and weakly with INPP5D (via NPXY motifs); the interaction is impaired by tyrosine phosphorylation of the respective NPXY motifs. Can weakly interact (via PID domain) with LRP1 (via NPXY motif); the interaction is enhanced by tyrosine phosphorylation of the NPXY motif. Interacts with LRP2 (via NPXY motif); the interaction is not affected by tyrosine phosphorylation of the NPXY motif. Interacts with clathrin; in vitro can assemble clathrin triskelia into polyhedral coats. Interacts with AP2A2, ITGB1, ITGB3, ITGB5, PIAS2, DAB2IP, NOSTRIN, FCHO1, DVL3, EPS15, ITSN1 and EPS15L1. Interacts with SH3KBP1 (via SH3 domains). Interacts with GRB2; competes with SOS1 for binding to GRB2 and the interaction is enhanced by EGF and NT-3 stimulation. Interacts with MAP3K7; the interaction is induced by TGF-beta stimulation and may mediate TGF-beta stimulated JNK activation. Interacts with AXIN1 and PPP1CA; the interactions are mutually exclusive. Interacts with the globular tail of MYO6. Interacts (via DPF motifs) with FCHO2; the interaction is direct and required for DAB2-mediated LDLR endocytosis. Interacts with LRP6; the interaction involves LRP6 phosphorylation by CK2 and sequesters LRP6 towards clathrin-mediated endocytosis. Associates with the TGF-beta receptor complex. Interacts with SMAD2 and SMAD3; the interactions are enhanced upon TGF-beta stimulation. Interacts with GRB2; the interaction is enhanced by EGF and NT-3 stimulation. Interacts with SRC; the interaction is enhanced by EGF stimulation. Interacts with GRB2; the interaction is enhanced by EGF and NT-3 stimulation. Interacts (via NPXY motif) with DAB2 (via PID domain). Phosphorylated. Phosphorylation during mitosis is leading to membrane displacement. There is some ambiguity for the mitotic phosphosite Ser-326/328. As to expression, prostate.

The protein localises to the cytoplasm. Its subcellular location is the cytoplasmic vesicle. The protein resides in the clathrin-coated vesicle membrane. It localises to the membrane. It is found in the clathrin-coated pit. Adapter protein that functions as a clathrin-associated sorting protein (CLASP) required for clathrin-mediated endocytosis of selected cargo proteins. Can bind and assemble clathrin, and binds simultaneously to phosphatidylinositol 4,5-bisphosphate (PtdIns(4,5)P2) and cargos containing non-phosphorylated NPXY internalization motifs, such as the LDL receptor, to recruit them to clathrin-coated pits. Can function in clathrin-mediated endocytosis independently of the AP-2 complex. Involved in endocytosis of integrin beta-1; this function seems to redundant with the AP-2 complex and seems to require DAB2 binding to endocytosis accessory EH domain-containing proteins such as EPS15, EPS15L1 and ITSN1. Involved in endocytosis of cystic fibrosis transmembrane conductance regulator/CFTR. Involved in endocytosis of megalin/LRP2 lipoprotein receptor during embryonal development. Required for recycling of the TGF-beta receptor. Involved in CFTR trafficking to the late endosome. Involved in several receptor-mediated signaling pathways. Involved in TGF-beta receptor signaling and facilitates phosphorylation of the signal transducer SMAD2. Mediates TFG-beta-stimulated JNK activation. May inhibit the canoniocal Wnt/beta-catenin signaling pathway by stabilizing the beta-catenin destruction complex through a competing association with axin preventing its dephosphorylation through protein phosphatase 1 (PP1). Sequesters LRP6 towards clathrin-mediated endocytosis, leading to inhibition of Wnt/beta-catenin signaling. May activate non-canonical Wnt signaling. In cell surface growth factor/Ras signaling pathways proposed to inhibit ERK activation by interrupting the binding of GRB2 to SOS1 and to inhibit SRC by preventing its activating phosphorylation at 'Tyr-419'. Proposed to be involved in modulation of androgen receptor (AR) signaling mediated by SRC activation; seems to compete with AR for interaction with SRC. Plays a role in the CSF-1 signal transduction pathway. Plays a role in cellular differentiation. Involved in cell positioning and formation of visceral endoderm (VE) during embryogenesis and proposed to be required in the VE to respond to Nodal signaling coming from the epiblast. Required for the epithelial to mesenchymal transition, a process necessary for proper embryonic development. May be involved in myeloid cell differentiation and can induce macrophage adhesion and spreading. May act as a tumor suppressor. The polypeptide is Disabled homolog 2 (Dab2) (Rattus norvegicus (Rat)).